The following is a 508-amino-acid chain: Lysine--tRNA ligase (508 aa).

Positions 418 and 425 each coordinate Mg(2+).

The protein belongs to the class-II aminoacyl-tRNA synthetase family. Homodimer. Mg(2+) serves as cofactor.

It is found in the cytoplasm. The enzyme catalyses tRNA(Lys) + L-lysine + ATP = L-lysyl-tRNA(Lys) + AMP + diphosphate. The polypeptide is Lysine--tRNA ligase (Burkholderia ambifaria (strain MC40-6)).